The primary structure comprises 386 residues: Protein phosphatase methylesterase 1 (386 aa).

Residues 1 to 38 are disordered; it reads MSALEKSMHLGRLPSRPPLPGSGGSQSGAKMRMGPGRK. At serine 15 the chain carries Phosphoserine. Residue arginine 16 is modified to Asymmetric dimethylarginine; alternate. The residue at position 16 (arginine 16) is an Omega-N-methylarginine; alternate. Serine 42 carries the phosphoserine modification. Residues serine 156 and aspartate 181 contribute to the active site. Positions 254 to 265 are enriched in acidic residues; that stretch reads IIEEEEEDEEGS. The disordered stretch occupies residues 254-280; the sequence is IIEEEEEDEEGSESISKRKKEDDMETK. The segment covering 268 to 280 has biased composition (basic and acidic residues); the sequence is ISKRKKEDDMETK. Histidine 349 is an active-site residue.

It belongs to the AB hydrolase superfamily. As to quaternary structure, binds PPP2CA and PPP2CB. Post-translationally, phosphorylated by SIK1 following increases in intracellular sodium, leading to dissociation from the protein phosphatase 2A (PP2A) complex and subsequent dephosphorylation of sodium/potassium-transporting ATPase ATP1A1.

The enzyme catalyses [phosphatase 2A protein]-C-terminal L-leucine methyl ester + H2O = [phosphatase 2A protein]-C-terminal L-leucine + methanol + H(+). Functionally, demethylates proteins that have been reversibly carboxymethylated. Demethylates PPP2CB (in vitro) and PPP2CA. Binding to PPP2CA displaces the manganese ion and inactivates the enzyme. This is Protein phosphatase methylesterase 1 (PPME1) from Homo sapiens (Human).